The chain runs to 66 residues: COP9 signalosome complex subunit 6a (66 aa).

This sequence belongs to the peptidase M67A family. CSN6 subfamily. In terms of assembly, component of the CSN complex, probably composed of CSN1, CSN2, CSN3, CSN4, CSN5 (CSN5A or CSN5B), CSN6 (CSN6A or CSN6B), CSN7 and CSN8.

It is found in the cytoplasm. Its subcellular location is the nucleus. Its function is as follows. Component of the COP9 signalosome complex (CSN), a complex involved in various cellular and developmental processes such as photomorphogenesis and auxin and jasmonate responses. The CSN complex is an essential regulator of the ubiquitin (Ubl) conjugation pathway by mediating the deneddylation of the cullin subunits of SCF-type E3 ligase complexes, leading to decrease the Ubl ligase activity of SCF. It is involved in repression of photomorphogenesis in darkness by regulating the activity of COP1-containing Ubl ligase complexes. This Brassica oleracea (Wild cabbage) protein is COP9 signalosome complex subunit 6a (CSN6A).